A 98-amino-acid polypeptide reads, in one-letter code: NADH-ubiquinone oxidoreductase chain 4L (98 aa).

3 consecutive transmembrane segments (helical) span residues 2–22 (PSISTNITLAFTIALTGMLVF), 29–49 (SLLCLEGMMLAMFILSILFIM), and 61–81 (ILLLVLAACEAAIGLALLVMV).

The protein belongs to the complex I subunit 4L family. In terms of assembly, core subunit of respiratory chain NADH dehydrogenase (Complex I) which is composed of 45 different subunits.

Its subcellular location is the mitochondrion inner membrane. It carries out the reaction a ubiquinone + NADH + 5 H(+)(in) = a ubiquinol + NAD(+) + 4 H(+)(out). Functionally, core subunit of the mitochondrial membrane respiratory chain NADH dehydrogenase (Complex I) which catalyzes electron transfer from NADH through the respiratory chain, using ubiquinone as an electron acceptor. Part of the enzyme membrane arm which is embedded in the lipid bilayer and involved in proton translocation. The sequence is that of NADH-ubiquinone oxidoreductase chain 4L (MT-ND4L) from Lepilemur sahamalazensis (Sahamalaza sportive lemur).